Reading from the N-terminus, the 966-residue chain is MAVGMENATASGECGEILKPRTDKREYRRIVLKNSLEVLLISDPETDKCAASMNVSVGSFTDPEGLEGLAHFLEHMLFYASEKYPEEDSYSKYITEHGGSTNAYTSSEDTNYHFDINTDSFYEALDRFAQFFIQPLMSTDATMREIKAVDSEHQNNLLSDSWRMAQLQKHLSREDHPYHKFSTGNMDTLHVRPEENGVDTRSELIKFYDEHYSANIMHLVVYGKENLDKTQGLVEALFQGIRNTNQGIPRFPGQPCTLDHLQVLVKAVPIMQGHELSVSWPVTPSISHYEEAPCRYLGDLIGHEGEGSLFHALKILGWATGLYAGEADWSMEYSFFNVSIDLTDAGHEHMQDILGLLFEYIKVLQQSGVSQWIFDELSAICEAEFHYQAKIDPISYAVDISSNMKIYPTKHWLVGSSLPSKFNPAIVQKVLDELSPNNVRIFWESNKFEGQTDKVEPWYNTAYSLEKITKFTIQEWMQSAPDVNLLLPTPNVFIPTDFSLKDLKDKDIFPVLLRKTSYSRLWYKPDTKFFKPKAYVKMDFNCPLAVSSPDAAVLSDIFVWLLVDYLNEYAYYAQAAGLDYGLSLSDNGFELSLAGFNHKLRILLEAVIQKIAKFEVKPDRFSVIKETVTKAYQNNKFQQPHEQATNYCSLVLQDQIWPWTEELDALSHLEAEDLANFVPMLLSRTFVECYIAGNVEKDEAESMVKHIEDVLFTDSKPICRPLFPSQFLTNRVTELGTGMKHFYYQEGSNSSDENSALVHYIQVHKDEFSMNSKLQLFELIAKQDTFHQLRTIEQLGYITSLSLSNDSGVYGVQFIIQSSVKGPGHIDSRVESLLKDLESKFYNMSDEEFKSNVTNLIDMKLEKDKNLDEESWFYWAEIQTGTLKFNRIDAEVAALRLLKKDEWIDFFDEYIKVDAPNKKSLSICVYGNQHLKEMRNDKDKIPSTSIEIEDIVCFRKSQPLYGSLKL.

His-71 contributes to the Zn(2+) binding site. Glu-74 functions as the Proton acceptor in the catalytic mechanism. Residue His-75 coordinates Zn(2+). Glu-145 is an active-site residue. Position 152 (Glu-152) interacts with Zn(2+).

This sequence belongs to the peptidase M16 family. Requires Zn(2+) as cofactor.

The chain is Insulin-degrading enzyme-like 2 from Arabidopsis thaliana (Mouse-ear cress).